The primary structure comprises 180 residues: Protein C2-DOMAIN ABA-RELATED 10 (180 aa).

Residues 1 to 105 enclose the C2 domain; the sequence is MDQKPLGLLT…EALKMGMELL (105 aa). Residues Arg-22, Asp-23, Asp-28, Asp-74, Trp-75, Asp-76, and Asp-82 each contribute to the Ca(2+) site.

The protein belongs to the plant CAR protein family. As to quaternary structure, binds to PYR/PYL/RCAR abscisic acid intracellular receptors in an ABA-independent manner, both at the plasma membrane and in the nucleus.

The protein resides in the cell membrane. Its subcellular location is the nucleus. Functionally, stimulates the GTPase/ATPase activities of Obg-like ATPases. Mediates the transient calcium-dependent interaction of PYR/PYL/RCAR abscisic acid (ABA) receptors with the plasma membrane and thus regulates ABA sensitivity. In Arabidopsis thaliana (Mouse-ear cress), this protein is Protein C2-DOMAIN ABA-RELATED 10.